The sequence spans 223 residues: Cytidylate kinase (223 aa).

Residue 10–18 coordinates ATP; sequence GPASSGKST.

This sequence belongs to the cytidylate kinase family. Type 1 subfamily.

It localises to the cytoplasm. It carries out the reaction CMP + ATP = CDP + ADP. The enzyme catalyses dCMP + ATP = dCDP + ADP. This chain is Cytidylate kinase, found in Streptococcus pneumoniae serotype 4 (strain ATCC BAA-334 / TIGR4).